A 736-amino-acid polypeptide reads, in one-letter code: Protein DSF2 (736 aa).

The segment covering 1 to 10 (MNQNLKNTSW) has biased composition (polar residues). 4 disordered regions span residues 1 to 46 (MNQN…DSQF), 178 to 208 (SGMKPQMNRNEKDYKYPNLENGNRSTNSPNP), 229 to 410 (ISDN…SGEN), and 440 to 461 (FKTASTPQSSTDKKKNSKARPN). Residues 14–24 (IGSDDQERKAN) are compositionally biased toward basic and acidic residues. Polar residues-rich tracts occupy residues 25–46 (SSEVSQSPPPNNSFESSMDSQF) and 197–208 (ENGNRSTNSPNP). Over residues 238 to 256 (NNANSKNNRTTSNNINTST) the composition is skewed to low complexity. The segment covering 264–284 (KQSCPNEFTTTQKSNCLYRNG) has biased composition (polar residues). Low complexity-rich tracts occupy residues 285–294 (SSTSTNTSFS), 303–318 (KTQSSFESESSSFSKL), and 335–350 (SNSSTSTITKTNTMTN). Residues 374–385 (KLFKSPRTRAKN) show a composition bias toward basic residues. A compositionally biased stretch (polar residues) spans 392–410 (EGSSPIRSATNSLDFSGEN).

In Saccharomyces cerevisiae (strain ATCC 204508 / S288c) (Baker's yeast), this protein is Protein DSF2 (DSF2).